A 76-amino-acid chain; its full sequence is DNA-directed RNA polymerase subunit Rpo5 (76 aa).

This sequence belongs to the archaeal Rpo5/eukaryotic RPB5 RNA polymerase subunit family. As to quaternary structure, part of the RNA polymerase complex.

The protein localises to the cytoplasm. It carries out the reaction RNA(n) + a ribonucleoside 5'-triphosphate = RNA(n+1) + diphosphate. In terms of biological role, DNA-dependent RNA polymerase (RNAP) catalyzes the transcription of DNA into RNA using the four ribonucleoside triphosphates as substrates. The sequence is that of DNA-directed RNA polymerase subunit Rpo5 from Archaeoglobus fulgidus (strain ATCC 49558 / DSM 4304 / JCM 9628 / NBRC 100126 / VC-16).